We begin with the raw amino-acid sequence, 346 residues long: tRNA N6-adenosine threonylcarbamoyltransferase (346 aa).

His-111 and His-115 together coordinate Fe cation. Residues 134 to 138, Asp-167, Gly-180, and Asn-279 contribute to the substrate site; that span reads LVSGG. Asp-307 contacts Fe cation.

The protein belongs to the KAE1 / TsaD family. Fe(2+) is required as a cofactor.

It localises to the cytoplasm. It carries out the reaction L-threonylcarbamoyladenylate + adenosine(37) in tRNA = N(6)-L-threonylcarbamoyladenosine(37) in tRNA + AMP + H(+). Required for the formation of a threonylcarbamoyl group on adenosine at position 37 (t(6)A37) in tRNAs that read codons beginning with adenine. Is involved in the transfer of the threonylcarbamoyl moiety of threonylcarbamoyl-AMP (TC-AMP) to the N6 group of A37, together with TsaE and TsaB. TsaD likely plays a direct catalytic role in this reaction. This Burkholderia vietnamiensis (strain G4 / LMG 22486) (Burkholderia cepacia (strain R1808)) protein is tRNA N6-adenosine threonylcarbamoyltransferase.